A 406-amino-acid polypeptide reads, in one-letter code: Peptide chain release factor PrfB3, chloroplastic (406 aa).

This sequence belongs to the prokaryotic/mitochondrial release factor family. In terms of assembly, interacts with PDE338.

It localises to the plastid. The protein localises to the chloroplast stroma. Its subcellular location is the chloroplast. Functionally, involved in the light- and stress-dependent regulation of stability of 3' processed petB transcripts, thus regulating cytochrome b6 accumulation, a rate-limiting step in photosynthetic electron transport. May be recruited to specifically protect petB transcripts against 3'-5' exonucleolytic attack by masking the 3' ends. Does not function as release factor. This Arabidopsis thaliana (Mouse-ear cress) protein is Peptide chain release factor PrfB3, chloroplastic.